The sequence spans 85 residues: UPF0335 protein BQ12070 (85 aa).

The protein belongs to the UPF0335 family.

The chain is UPF0335 protein BQ12070 from Bartonella quintana (strain Toulouse) (Rochalimaea quintana).